Reading from the N-terminus, the 1137-residue chain is MSDIVEKTLTALPGLFLQNQPGGGPAAAKASFSSRLGSLVRGITALTSKHEEEKLIQQELSSLKATVSAPTTTLKMMKECMVRLIYCEMLGYDASFGYIHAIKLAQQGNLLEKRVGYLAVSLFLHESHELLLLLVNTVVKDLQSTNLVEVCMALTVVSQIFPCEMIPAVLPLIEDKLQHSKEIVRRKAVLALYKFHLIAPNQVQHIHIKFRKALCDRDVGVMAASLHIYLRMIKENSSGYKDLTGSFVTILKQVVGGKLPVEFNYHSVPAPWLQIQLLRILGLLGKDDQRTSELMYDVLDESLRRAELNHNVTYAILFECVHTVYSIYPKSELLEKAAKCIGKFVLSPKINLKYLGLKALTYVIQQDPTLALQHQMTIIECLDHPDPIIKRETLELLYRITNAQNITVIVQKMLEYLHQSKEEYVIVNLVGKIAELAEKYAPDNAWFIQTMNAVFSVGGDVMHPDIPNNFLRLLAEGFDDETEDQQLRLYAVQSYLTLLDMENVFYPQRFLQVMSWVLGEYSYLLDKETPEEVIAKLYKLLMNDSVSSETKAWLIAAVTKLTSQAHSSNTVERLIHEFTISLDTCMRQHAFELKHLHENVELMKSLLPVDRSCEDLVVDASLSFLDGFVAEGLSQGAAPYKPPHQRQEEKLSQEKVLNFEPYGLSFSSSGFTGRQSPAGISLGSDVSGNSAETGLKETNSLKLEGIKKLWGKEGYLPKKESKTGDESGALPVPQESIMENVDQAITKKDQSQVLTQSKEEKEKQLLASSLFVGLGSESTINLLGKADTVSHKFRRKSKVKEAKSGETTSTHNMTCSSFSSLSNVAYEDDYYSNTLHDTGDKELKKFSLTSELLDSESLTELPLVEKFSYCSLSTPSLFANNNMEIFHPPQSTAASVAKESSLASSFLEETTEYIHSNAMEVCNNETISVSSYKIWKDDCLLMVWSVTNKSGLELKSADLEIFPAENFKVTEQPGCCLPVMEAESTKSFQYSVQIEKPFTEGNLTGFISYHMMDTHSAQLEFSVNLSLLDFIRPLKISSDDFGKLWLSFANDVKQNVKMSESQAALPSALKTLQQKLRLHIIEIIGNEGLLACQLLPSIPCLLHCRVHADVLALWFRSSCSTLPDYLLYQCQKVMEGS.

2 positions are modified to phosphoserine: Ser-700 and Ser-857. Positions 727–1137 (SGALPVPQES…YQCQKVMEGS (411 aa)) are interaction with TEPSIN.

The protein belongs to the adaptor complexes large subunit family. As to quaternary structure, adaptor protein complex 4 (AP-4) is a heterotetramer composed of two large adaptins (epsilon-type subunit AP4E1 and beta-type subunit AP4B1), a medium adaptin (mu-type subunit AP4M1) and a small adaptin (sigma-type AP4S1). Interacts with TEPSIN. Interacts with GRIA2; probably indirect it mediates the somatodendritic localization of GRIA2 in neurons. In terms of tissue distribution, widely expressed.

Its subcellular location is the golgi apparatus. It is found in the trans-Golgi network membrane. Functionally, component of the adaptor protein complex 4 (AP-4). Adaptor protein complexes are vesicle coat components involved both in vesicle formation and cargo selection. They control the vesicular transport of proteins in different trafficking pathways. AP-4 forms a non clathrin-associated coat on vesicles departing the trans-Golgi network (TGN) and may be involved in the targeting of proteins from the trans-Golgi network (TGN) to the endosomal-lysosomal system. It is also involved in protein sorting to the basolateral membrane in epithelial cells and the proper asymmetric localization of somatodendritic proteins in neurons. AP-4 is involved in the recognition and binding of tyrosine-based sorting signals found in the cytoplasmic part of cargos, but may also recognize other types of sorting signal. The protein is AP-4 complex subunit epsilon-1 of Homo sapiens (Human).